We begin with the raw amino-acid sequence, 204 residues long: Large ribosomal subunit protein eL15 (204 aa).

It belongs to the eukaryotic ribosomal protein eL15 family.

This chain is Large ribosomal subunit protein eL15 (RpL15), found in Chironomus tentans (Midge).